A 100-amino-acid chain; its full sequence is NADH-quinone oxidoreductase subunit K (100 aa).

3 helical membrane passes run 4–24 (LQHGLILAAILFALGLTGLLI), 28–48 (LLFMLISLEIMINAAALAFVV), and 60–80 (VMYILAISLAAAEASIGLALL).

Belongs to the complex I subunit 4L family. In terms of assembly, NDH-1 is composed of 13 different subunits. Subunits NuoA, H, J, K, L, M, N constitute the membrane sector of the complex.

The protein localises to the cell inner membrane. It carries out the reaction a quinone + NADH + 5 H(+)(in) = a quinol + NAD(+) + 4 H(+)(out). Functionally, NDH-1 shuttles electrons from NADH, via FMN and iron-sulfur (Fe-S) centers, to quinones in the respiratory chain. The immediate electron acceptor for the enzyme in this species is believed to be ubiquinone. Couples the redox reaction to proton translocation (for every two electrons transferred, four hydrogen ions are translocated across the cytoplasmic membrane), and thus conserves the redox energy in a proton gradient. This is NADH-quinone oxidoreductase subunit K from Edwardsiella ictaluri (strain 93-146).